Consider the following 353-residue polypeptide: DNA-directed RNA polymerase subunit alpha (353 aa).

An alpha N-terminal domain (alpha-NTD) region spans residues 1–245; sequence MEKIQKITYK…AHFQIIGNIN (245 aa). The interval 261-353 is alpha C-terminal domain (alpha-CTD); the sequence is EREIKSTTPI…QLNNSEEGEE (93 aa).

The protein belongs to the RNA polymerase alpha chain family. In terms of assembly, homodimer. The RNAP catalytic core consists of 2 alpha, 1 beta, 1 beta' and 1 omega subunit. When a sigma factor is associated with the core the holoenzyme is formed, which can initiate transcription.

It catalyses the reaction RNA(n) + a ribonucleoside 5'-triphosphate = RNA(n+1) + diphosphate. In terms of biological role, DNA-dependent RNA polymerase catalyzes the transcription of DNA into RNA using the four ribonucleoside triphosphates as substrates. This is DNA-directed RNA polymerase subunit alpha from Mycoplasma sp.